We begin with the raw amino-acid sequence, 180 residues long: UPF0340 protein BLi03936/BL03990 (180 aa).

This sequence belongs to the UPF0340 family.

This Bacillus licheniformis (strain ATCC 14580 / DSM 13 / JCM 2505 / CCUG 7422 / NBRC 12200 / NCIMB 9375 / NCTC 10341 / NRRL NRS-1264 / Gibson 46) protein is UPF0340 protein BLi03936/BL03990.